We begin with the raw amino-acid sequence, 345 residues long: UDP-N-acetylenolpyruvoylglucosamine reductase (345 aa).

In terms of domain architecture, FAD-binding PCMH-type spans 16 to 186; it reads LPAYASNVIS…VSVGIKLMKS (171 aa). Residue arginine 162 is part of the active site. The active-site Proton donor is serine 232. The active site involves glutamate 328.

It belongs to the MurB family. It depends on FAD as a cofactor.

The protein resides in the cytoplasm. The enzyme catalyses UDP-N-acetyl-alpha-D-muramate + NADP(+) = UDP-N-acetyl-3-O-(1-carboxyvinyl)-alpha-D-glucosamine + NADPH + H(+). It participates in cell wall biogenesis; peptidoglycan biosynthesis. Functionally, cell wall formation. In Yersinia pestis, this protein is UDP-N-acetylenolpyruvoylglucosamine reductase.